The chain runs to 97 residues: Ferredoxin-3 (97 aa).

4Fe-4S ferredoxin-type domains lie at 18-47 (FAES…LKAL) and 65-95 (KVMV…HNPL). 8 residues coordinate [4Fe-4S] cluster: Cys-27, Cys-30, Cys-33, Cys-37, Cys-75, Cys-78, Cys-81, and Cys-85.

As to quaternary structure, homodimer. [4Fe-4S] cluster serves as cofactor.

Functionally, ferredoxins are iron-sulfur proteins that transfer electrons in a wide variety of metabolic reactions. The sequence is that of Ferredoxin-3 (fdxB) from Nostoc sp. (strain PCC 7120 / SAG 25.82 / UTEX 2576).